Consider the following 644-residue polypeptide: Exoribonuclease 2 (644 aa).

An RNB domain is found at 189 to 516 (REDLTALDFV…NHRLLKAVIK (328 aa)). Residues 561 to 643 (DTRFAAEIVD…ETRSIIARPV (83 aa)) enclose the S1 motif domain.

It belongs to the RNR ribonuclease family. RNase II subfamily.

It localises to the cytoplasm. The catalysed reaction is Exonucleolytic cleavage in the 3'- to 5'-direction to yield nucleoside 5'-phosphates.. In terms of biological role, involved in mRNA degradation. Hydrolyzes single-stranded polyribonucleotides processively in the 3' to 5' direction. This chain is Exoribonuclease 2, found in Escherichia coli (strain ATCC 8739 / DSM 1576 / NBRC 3972 / NCIMB 8545 / WDCM 00012 / Crooks).